A 567-amino-acid polypeptide reads, in one-letter code: Protein ESMERALDA 1 (567 aa).

Positions 1–41 (MLAKNRLPGSGHTTPSPPASPRRSPRYRHGRSKAAAGSRFP) are disordered. The Cytoplasmic segment spans residues 1 to 65 (MLAKNRLPGS…ILLSVLLRRQ (65 aa)). The span at 23 to 32 (RSPRYRHGRS) shows a compositional bias: basic residues. The chain crosses the membrane as a helical; Signal-anchor for type II membrane protein span at residues 66 to 86 (GIFLFAPLIYISCMLLYMGTV). Topologically, residues 87–567 (SFDVVPIIQR…TPESRPPPAT (481 aa)) are lumenal. N-linked (GlcNAc...) asparagine glycosylation is found at N121, N145, N184, and N238. A substrate-binding site is contributed by 331-333 (HLR). N403, N419, N449, N538, and N554 each carry an N-linked (GlcNAc...) asparagine glycan.

It belongs to the glycosyltransferase GT106 family. In terms of tissue distribution, ubiquitous.

Its subcellular location is the golgi apparatus membrane. Its pathway is protein modification; protein glycosylation. Glycosyltransferase that plays a role in cell adhesion. The protein is Protein ESMERALDA 1 of Arabidopsis thaliana (Mouse-ear cress).